A 451-amino-acid polypeptide reads, in one-letter code: MGLKNLIIRGRNYISDHLTKSSLEKAIIRRQKRGKVIENEKLIILGCGWGSYSFLKNLNSIKYDITVISPRNHFLFTPLLTSSAVGTLEFRSIAEPVRTTRDINEFKYIQASVTSINPENNSVLVKSTFHNEKPFEMKYDKLVIGVGSRNNTFGIKGVEENANFLKELHHAREIRQKIIECFERASLPDVSTEERERLLSFVIVGGGATGIEFTSELNDFFSEDLSRLFPFVPVNEVKIILLEASGKILSTFDQKLVKKALINFRNSGIDVRTHSSVKEVLKDYVILDNGDRIPYGLLVWSTGIGQHPLVKNSSFEKDSHDRIIVDDHLRVKNYSNVFSFGDCANVENKNYPPTAQVASQSAVYLAKEFNNLEKLNPNPPKPFAFKFLGLLAYTGKKSGILQTDFFDLSGFIGFITWRSAYLTRLGSLRSKIQVPFDWMRTLIFGRDISSF.

41–71 (KLIILGCGWGSYSFLKNLNSIKYDITVISPR) contributes to the FAD binding site. 199–236 (LSFVIVGGGATGIEFTSELNDFFSEDLSRLFPFVPVNE) provides a ligand contact to NAD(+).

This sequence belongs to the NADH dehydrogenase family. FAD serves as cofactor.

The catalysed reaction is a ubiquinone + NADH + 5 H(+)(in) = a ubiquinol + NAD(+) + 4 H(+)(out). This is Probable NADH dehydrogenase from Dictyostelium discoideum (Social amoeba).